Consider the following 607-residue polypeptide: Large ribosomal subunit assembly factor BipA (607 aa).

A tr-type G domain is found at 3–198 (HSIRNIAIIA…SIIKYAPAPN (196 aa)). GTP contacts are provided by residues 15 to 20 (DHGKTT) and 128 to 131 (NKID).

This sequence belongs to the TRAFAC class translation factor GTPase superfamily. Classic translation factor GTPase family. BipA subfamily. Monomer.

Its subcellular location is the cytoplasm. The catalysed reaction is GTP + H2O = GDP + phosphate + H(+). Its function is as follows. A 50S ribosomal subunit assembly protein with GTPase activity, required for 50S subunit assembly at low temperatures, may also play a role in translation. Binds GTP and analogs. Binds the 70S ribosome between the 30S and 50S subunits, in a similar position as ribosome-bound EF-G; it contacts a number of ribosomal proteins, both rRNAs and the A-site tRNA. This Buchnera aphidicola subsp. Acyrthosiphon pisum (strain APS) (Acyrthosiphon pisum symbiotic bacterium) protein is Large ribosomal subunit assembly factor BipA.